Consider the following 355-residue polypeptide: DNA-binding protein RHL1 (355 aa).

Disordered stretches follow at residues 1–26, 181–215, and 229–355; these read MVRA…KQRK, DFQG…VDNE, and IQVT…SSKA. Over residues 14–23 the composition is skewed to basic and acidic residues; the sequence is GGDKDDAESK. Composition is skewed to low complexity over residues 230 to 246 and 260 to 274; these read QVTP…VTPV and AETS…SEGN. 2 stretches are compositionally biased toward basic and acidic residues: residues 281–296 and 309–326; these read KPLL…REES and LPEE…KDSK. Residues 344-355 are compositionally biased toward low complexity; sequence AGTSKAKSSSKA.

In terms of assembly, interacts with BIN4 and TOP6A, but not with TOP6B. Expressed inproliferating and endoreduplicating cells.

The protein resides in the nucleus. In terms of biological role, component of the DNA topoisomerase VI complex involved in chromatin organization and progression of endoreduplication cycles. Binds to DNA. Required for endoreduplication beyond 8C. The protein is DNA-binding protein RHL1 (RHL1) of Arabidopsis thaliana (Mouse-ear cress).